We begin with the raw amino-acid sequence, 262 residues long: Adenosylcobinamide-GDP ribazoletransferase (262 aa).

6 helical membrane-spanning segments follow: residues 43–63, 66–86, 120–140, 146–166, 191–211, and 242–262; these read YFGL…WLTQ, LPAG…TGGF, GALA…ELAL, AGSA…SLIF, LFIL…IAAL, and AAQQ…GGIL.

The protein belongs to the CobS family. Mg(2+) is required as a cofactor.

It localises to the cell inner membrane. The catalysed reaction is alpha-ribazole + adenosylcob(III)inamide-GDP = adenosylcob(III)alamin + GMP + H(+). It carries out the reaction alpha-ribazole 5'-phosphate + adenosylcob(III)inamide-GDP = adenosylcob(III)alamin 5'-phosphate + GMP + H(+). The protein operates within cofactor biosynthesis; adenosylcobalamin biosynthesis; adenosylcobalamin from cob(II)yrinate a,c-diamide: step 7/7. In terms of biological role, joins adenosylcobinamide-GDP and alpha-ribazole to generate adenosylcobalamin (Ado-cobalamin). Also synthesizes adenosylcobalamin 5'-phosphate from adenosylcobinamide-GDP and alpha-ribazole 5'-phosphate. In Shewanella oneidensis (strain ATCC 700550 / JCM 31522 / CIP 106686 / LMG 19005 / NCIMB 14063 / MR-1), this protein is Adenosylcobinamide-GDP ribazoletransferase.